The primary structure comprises 373 residues: Queuine tRNA-ribosyltransferase (373 aa).

Aspartate 90 (proton acceptor) is an active-site residue. Substrate is bound by residues 90 to 94 (DSGGF), aspartate 144, glutamine 193, and glycine 220. Residues 251-257 (GVGTPED) form an RNA binding region. Aspartate 270 (nucleophile) is an active-site residue. Positions 275-279 (TRNAR) are RNA binding; important for wobble base 34 recognition. Positions 308, 310, 313, and 339 each coordinate Zn(2+).

Belongs to the queuine tRNA-ribosyltransferase family. As to quaternary structure, homodimer. Within each dimer, one monomer is responsible for RNA recognition and catalysis, while the other monomer binds to the replacement base PreQ1. Requires Zn(2+) as cofactor.

It carries out the reaction 7-aminomethyl-7-carbaguanine + guanosine(34) in tRNA = 7-aminomethyl-7-carbaguanosine(34) in tRNA + guanine. It functions in the pathway tRNA modification; tRNA-queuosine biosynthesis. Its function is as follows. Catalyzes the base-exchange of a guanine (G) residue with the queuine precursor 7-aminomethyl-7-deazaguanine (PreQ1) at position 34 (anticodon wobble position) in tRNAs with GU(N) anticodons (tRNA-Asp, -Asn, -His and -Tyr). Catalysis occurs through a double-displacement mechanism. The nucleophile active site attacks the C1' of nucleotide 34 to detach the guanine base from the RNA, forming a covalent enzyme-RNA intermediate. The proton acceptor active site deprotonates the incoming PreQ1, allowing a nucleophilic attack on the C1' of the ribose to form the product. After dissociation, two additional enzymatic reactions on the tRNA convert PreQ1 to queuine (Q), resulting in the hypermodified nucleoside queuosine (7-(((4,5-cis-dihydroxy-2-cyclopenten-1-yl)amino)methyl)-7-deazaguanosine). In Campylobacter jejuni subsp. jejuni serotype O:23/36 (strain 81-176), this protein is Queuine tRNA-ribosyltransferase.